Reading from the N-terminus, the 149-residue chain is UPF0208 membrane protein VFMJ11_0876 (149 aa).

Transmembrane regions (helical) follow at residues 41 to 61 and 69 to 89; these read FAVK…MVFN and AIII…WLGN.

Belongs to the UPF0208 family.

It is found in the cell inner membrane. The sequence is that of UPF0208 membrane protein VFMJ11_0876 from Aliivibrio fischeri (strain MJ11) (Vibrio fischeri).